Consider the following 156-residue polypeptide: Succinate dehydrogenase assembly factor 2-B, mitochondrial (156 aa).

A mitochondrion-targeting transit peptide spans 1 to 24; it reads MLRQFIVSTVGRRLQLPMMAQSRL.

The protein belongs to the SDHAF2 family. As to quaternary structure, interacts with the flavoprotein subunit within the SDH catalytic dimer.

It localises to the mitochondrion matrix. Its function is as follows. Plays an essential role in the assembly of succinate dehydrogenase (SDH), an enzyme complex (also referred to as respiratory complex II) that is a component of both the tricarboxylic acid (TCA) cycle and the mitochondrial electron transport chain, and which couples the oxidation of succinate to fumarate with the reduction of ubiquinone (coenzyme Q) to ubiquinol. Required for flavinylation (covalent attachment of FAD) of the flavoprotein subunit of the SDH catalytic dimer. This Drosophila melanogaster (Fruit fly) protein is Succinate dehydrogenase assembly factor 2-B, mitochondrial.